Reading from the N-terminus, the 379-residue chain is Muconate cycloisomerase 1-1 (379 aa).

Lys-169 is an active-site residue. Residues Asp-198, Glu-224, and Asp-247 each coordinate Mn(2+).

Belongs to the mandelate racemase/muconate lactonizing enzyme family. In terms of assembly, homooctamer. Mn(2+) serves as cofactor.

It catalyses the reaction (S)-muconolactone = cis,cis-muconate + H(+). The protein operates within aromatic compound metabolism; beta-ketoadipate pathway; 5-oxo-4,5-dihydro-2-furylacetate from catechol: step 2/3. Catalyzes a syn cycloisomerization. The sequence is that of Muconate cycloisomerase 1-1 (catB1) from Acinetobacter lwoffii.